A 73-amino-acid chain; its full sequence is Putative membrane protein insertion efficiency factor (73 aa).

This sequence belongs to the UPF0161 family.

It is found in the cell inner membrane. Its function is as follows. Could be involved in insertion of integral membrane proteins into the membrane. This chain is Putative membrane protein insertion efficiency factor, found in Jannaschia sp. (strain CCS1).